The sequence spans 222 residues: Putative metal transport protein MJ1569 (222 aa).

6 consecutive transmembrane segments (helical) span residues 3 to 23, 39 to 59, 81 to 101, 102 to 122, 135 to 155, and 180 to 200; these read IPDG…MIPI, LPLL…NLPV, WVAT…FGDG, GITC…FVGY, VIAS…VAGF, and AFAH…IVVW.

It belongs to the CbiM family.

It is found in the cell membrane. May be involved in metal transport. In Methanocaldococcus jannaschii (strain ATCC 43067 / DSM 2661 / JAL-1 / JCM 10045 / NBRC 100440) (Methanococcus jannaschii), this protein is Putative metal transport protein MJ1569.